Here is an 84-residue protein sequence, read N- to C-terminus: MNKTQGNLQDLFLNVLRRDNTPVTIYLVNGFQLKGVVRGFDNFTVVLDADGKQQMIYKHAISTIMPFRPVNLMAESRAQAEAKQ.

The Sm domain maps to 10–70 (DLFLNVLRRD…ISTIMPFRPV (61 aa)).

The protein belongs to the Hfq family. In terms of assembly, homohexamer.

RNA chaperone that binds small regulatory RNA (sRNAs) and mRNAs to facilitate mRNA translational regulation in response to envelope stress, environmental stress and changes in metabolite concentrations. Also binds with high specificity to tRNAs. The sequence is that of RNA-binding protein Hfq from Moorella thermoacetica (strain ATCC 39073 / JCM 9320).